The following is a 153-amino-acid chain: MAL-like protein (153 aa).

4 helical membrane-spanning segments follow: residues 22 to 42 (LFLTIPFAFFLPELIFGFLVW), 59 to 79 (VMYVSLTSFLISLMFLLSYLF), 97 to 117 (GTTGILYMSAAVLQVHATIVS), and 131 to 151 (AASFFAFIATLLYILHAFSIY). One can recognise an MARVEL domain in the interval 22–153 (LFLTIPFAFF…ILHAFSIYYH (132 aa)).

This sequence belongs to the MAL family.

The protein resides in the membrane. This is MAL-like protein (MALL) from Homo sapiens (Human).